Reading from the N-terminus, the 94-residue chain is Signal peptidase complex subunit 1 (94 aa).

Position 2 is an N-acetylserine (Ser-2). Over Ser-2 to Gln-28 the chain is Cytoplasmic. Residues Gln-29 to Leu-49 form a helical membrane-spanning segment. Lys-50 is a topological domain (lumenal). A helical transmembrane segment spans residues Val-51 to Tyr-71. Topologically, residues Pro-72–Asp-94 are cytoplasmic.

It belongs to the SPCS1 family. As to quaternary structure, component of the signal peptidase complex (SPC) composed of a catalytic subunit SEC11 and three accessory subunits SPC1, SPC2 and SPC3. The complex induces a local thinning of the ER membrane which is used to measure the length of the signal peptide (SP) h-region of protein substrates. This ensures the selectivity of the complex towards h-regions shorter than 18-20 amino acids. SPC associates with the translocon complex. Interacts with SBH1 and SEB2/SBH2.

The protein localises to the endoplasmic reticulum membrane. Its function is as follows. Component of the signal peptidase complex (SPC) which catalyzes the cleavage of N-terminal signal sequences from nascent proteins as they are translocated into the lumen of the endoplasmic reticulum. Dispensable for SPC enzymatic activity. In Saccharomyces cerevisiae (strain ATCC 204508 / S288c) (Baker's yeast), this protein is Signal peptidase complex subunit 1 (SPC1).